Reading from the N-terminus, the 139-residue chain is D-ribose pyranase (139 aa).

Catalysis depends on H20, which acts as the Proton donor. Residues D28, H106, and 128 to 130 (YAN) contribute to the substrate site.

Belongs to the RbsD / FucU family. RbsD subfamily. In terms of assembly, homodecamer.

It is found in the cytoplasm. It carries out the reaction beta-D-ribopyranose = beta-D-ribofuranose. It participates in carbohydrate metabolism; D-ribose degradation; D-ribose 5-phosphate from beta-D-ribopyranose: step 1/2. Catalyzes the interconversion of beta-pyran and beta-furan forms of D-ribose. The chain is D-ribose pyranase from Proteus mirabilis (strain HI4320).